Reading from the N-terminus, the 720-residue chain is TAL effector protein Rip19 (720 aa).

2 disordered regions span residues 13 to 85 (SVSL…PSLV) and 175 to 205 (QAFASPPRAPRSARARRARTGGDAWPAPTFL). Positions 67–85 (PRRPLPVAPASAPPAPSLV) are enriched in pro residues. Positions 185–191 (RSARARR) match the Nuclear localization signal 1 motif. The Cryptic repeat -1 repeat unit spans residues 286–320 (LTRAHIVDIARQRSGDLALQALLPVATALTAAPLR). Residues 321-354 (LSASQIATVAQYGERPAIQALYRLRRKLTRAPLH) form a Cryptic repeat 0 repeat. One copy of the Core repeat 1 repeat lies at 355 to 389 (LTPQQVVAIASHDGGKPALEAVWAKLPVLRGVPYA). The Cryptic repeat +1 repeat unit spans residues 390 to 423 (LSTAQVVAIACISGQQALEAIEAHMPTLRQAPHS). A Cryptic repeat +2 repeat occupies 424 to 457 (LSPERVAAIACIGGRSAVEAVRQGLPVKAIRRIR). 3 consecutive short sequence motifs (nuclear localization signal) follow at residues 455 to 458 (RIRR), 583 to 586 (HRKR), and 620 to 623 (RRKR). The segment at 571–611 (SPGMAGQSACSPHRKRPAETAIAPRSIRRRPNNAGQPSEPW) is disordered.

Belongs to the transcription activator-like effector (TALE) family. RipTAL/RTL subfamily.

It is found in the secreted. The protein resides in the host nucleus. In terms of biological role, does not activate plant gene transcription, because it has too few core repeats. In Ralstonia solanacearum (Pseudomonas solanacearum), this protein is TAL effector protein Rip19.